Reading from the N-terminus, the 377-residue chain is Chorismate synthase (377 aa).

R47 serves as a coordination point for NADP(+). FMN contacts are provided by residues 124 to 126 (RSS), 252 to 253 (NS), G296, 311 to 315 (KPTPS), and R338.

This sequence belongs to the chorismate synthase family. The cofactor is FMNH2.

The enzyme catalyses 5-O-(1-carboxyvinyl)-3-phosphoshikimate = chorismate + phosphate. It participates in metabolic intermediate biosynthesis; chorismate biosynthesis; chorismate from D-erythrose 4-phosphate and phosphoenolpyruvate: step 7/7. Its function is as follows. Catalyzes the anti-1,4-elimination of the C-3 phosphate and the C-6 proR hydrogen from 5-enolpyruvylshikimate-3-phosphate (EPSP) to yield chorismate, which is the branch point compound that serves as the starting substrate for the three terminal pathways of aromatic amino acid biosynthesis. This reaction introduces a second double bond into the aromatic ring system. In Methanococcus vannielii (strain ATCC 35089 / DSM 1224 / JCM 13029 / OCM 148 / SB), this protein is Chorismate synthase.